The primary structure comprises 332 residues: Small ribosomal subunit protein uS2 (332 aa).

Belongs to the universal ribosomal protein uS2 family.

The polypeptide is Small ribosomal subunit protein uS2 (Nitrobacter hamburgensis (strain DSM 10229 / NCIMB 13809 / X14)).